The following is a 447-amino-acid chain: N-succinylarginine dihydrolase (447 aa).

Substrate contacts are provided by residues 19 to 28 (AGLSFGNEAS), Asn110, and 137 to 138 (HR). Glu174 is an active-site residue. Arg214 contributes to the substrate binding site. The active site involves His250. Residues Asp252 and Asn365 each contribute to the substrate site. Cys371 acts as the Nucleophile in catalysis.

The protein belongs to the succinylarginine dihydrolase family. Homodimer.

It carries out the reaction N(2)-succinyl-L-arginine + 2 H2O + 2 H(+) = N(2)-succinyl-L-ornithine + 2 NH4(+) + CO2. It functions in the pathway amino-acid degradation; L-arginine degradation via AST pathway; L-glutamate and succinate from L-arginine: step 2/5. Functionally, catalyzes the hydrolysis of N(2)-succinylarginine into N(2)-succinylornithine, ammonia and CO(2). In Acinetobacter baumannii (strain ACICU), this protein is N-succinylarginine dihydrolase.